Reading from the N-terminus, the 525-residue chain is G patch domain-containing protein 3 (525 aa).

2 disordered regions span residues 54-85 (ERGP…PASD) and 246-317 (EQEE…QERT). The span at 274–299 (DEPEDEGQQQEEEEESGSEEDDDRGE) shows a compositional bias: acidic residues. Positions 300-317 (EWERHEALHEDVTGQERT) are enriched in basic and acidic residues. A G-patch domain is found at 411 to 459 (TKGIGRKVMERQGWAEGQGLGSRCSGVPEALDGDGQHPRCKRGLGYHGE).

As to quaternary structure, interacts with mitochondrial MAVS; the interaction is markedly increased upon viral infection.

It is found in the nucleus. It localises to the cytoplasm. Its function is as follows. Involved in transcriptional regulation. It is able to activate transcription from CXCR4 promoter and therefore it might control neural crest cell migration involved in ocular and craniofacial development. Is a negative regulator of immune antiviral response, acting via down-regulation of RIG-I-like receptors signaling and inhibition of type I interferon production. The control mechanism involves interaction with mitochondrial MAVS and inhibition of MAVS assembly with downstream proteins implicated in antiviral response, such as TBK1 and TRAF6. This is G patch domain-containing protein 3 (Gpatch3) from Mus musculus (Mouse).